We begin with the raw amino-acid sequence, 352 residues long: DNA polymerase IV (352 aa).

Residues Ile-4 to Gly-185 enclose the UmuC domain. Mg(2+) contacts are provided by Asp-8 and Asp-103. The active site involves Glu-104.

It belongs to the DNA polymerase type-Y family. As to quaternary structure, monomer. Mg(2+) serves as cofactor.

It is found in the cytoplasm. The enzyme catalyses DNA(n) + a 2'-deoxyribonucleoside 5'-triphosphate = DNA(n+1) + diphosphate. Functionally, poorly processive, error-prone DNA polymerase involved in untargeted mutagenesis. Copies undamaged DNA at stalled replication forks, which arise in vivo from mismatched or misaligned primer ends. These misaligned primers can be extended by PolIV. Exhibits no 3'-5' exonuclease (proofreading) activity. May be involved in translesional synthesis, in conjunction with the beta clamp from PolIII. In Enterobacter sp. (strain 638), this protein is DNA polymerase IV.